Reading from the N-terminus, the 457-residue chain is Siroheme synthase (457 aa).

The interval 1–204 is precorrin-2 dehydrogenase /sirohydrochlorin ferrochelatase; the sequence is MDHLPIFCQL…NDQKAITETT (204 aa). NAD(+) is bound by residues 22 to 23 and 43 to 44; these read DV and LA. Ser-128 carries the post-translational modification Phosphoserine. Residues 216–457 form a uroporphyrinogen-III C-methyltransferase region; sequence GEVVLVGAGP…RDKLNWFSNH (242 aa). Pro-225 is a binding site for S-adenosyl-L-methionine. Catalysis depends on Asp-248, which acts as the Proton acceptor. Lys-270 (proton donor) is an active-site residue. S-adenosyl-L-methionine is bound by residues 301–303, Ile-306, 331–332, Met-382, and Gly-411; these read GGD and TA.

In the N-terminal section; belongs to the precorrin-2 dehydrogenase / sirohydrochlorin ferrochelatase family. This sequence in the C-terminal section; belongs to the precorrin methyltransferase family.

It catalyses the reaction uroporphyrinogen III + 2 S-adenosyl-L-methionine = precorrin-2 + 2 S-adenosyl-L-homocysteine + H(+). The enzyme catalyses precorrin-2 + NAD(+) = sirohydrochlorin + NADH + 2 H(+). It carries out the reaction siroheme + 2 H(+) = sirohydrochlorin + Fe(2+). It functions in the pathway cofactor biosynthesis; adenosylcobalamin biosynthesis; precorrin-2 from uroporphyrinogen III: step 1/1. It participates in cofactor biosynthesis; adenosylcobalamin biosynthesis; sirohydrochlorin from precorrin-2: step 1/1. The protein operates within porphyrin-containing compound metabolism; siroheme biosynthesis; precorrin-2 from uroporphyrinogen III: step 1/1. Its pathway is porphyrin-containing compound metabolism; siroheme biosynthesis; siroheme from sirohydrochlorin: step 1/1. It functions in the pathway porphyrin-containing compound metabolism; siroheme biosynthesis; sirohydrochlorin from precorrin-2: step 1/1. Functionally, multifunctional enzyme that catalyzes the SAM-dependent methylations of uroporphyrinogen III at position C-2 and C-7 to form precorrin-2 via precorrin-1. Then it catalyzes the NAD-dependent ring dehydrogenation of precorrin-2 to yield sirohydrochlorin. Finally, it catalyzes the ferrochelation of sirohydrochlorin to yield siroheme. The protein is Siroheme synthase of Shigella dysenteriae serotype 1 (strain Sd197).